Reading from the N-terminus, the 485-residue chain is Chromosomal replication initiator protein DnaA (485 aa).

Residues 1 to 74 (MEKSKNIWSL…ILTNNGYDNV (74 aa)) form a domain I, interacts with DnaA modulators region. The interval 74–140 (VTIVFTNQSP…EEEPKNFKNP (67 aa)) is domain II. The tract at residues 141–357 (FLKKRYTFEN…AAVTKLKAYI (217 aa)) is domain III, AAA+ region. 4 residues coordinate ATP: glycine 185, glycine 187, lysine 188, and threonine 189. Residues 358 to 485 (DLDNIEIDID…TELMNKIKKN (128 aa)) form a domain IV, binds dsDNA region.

It belongs to the DnaA family. Oligomerizes as a right-handed, spiral filament on DNA at oriC.

Its subcellular location is the cytoplasm. Functionally, plays an essential role in the initiation and regulation of chromosomal replication. ATP-DnaA binds to the origin of replication (oriC) to initiate formation of the DNA replication initiation complex once per cell cycle. Binds the DnaA box (a 9 base pair repeat at the origin) and separates the double-stranded (ds)DNA. Forms a right-handed helical filament on oriC DNA; dsDNA binds to the exterior of the filament while single-stranded (ss)DNA is stabiized in the filament's interior. The ATP-DnaA-oriC complex binds and stabilizes one strand of the AT-rich DNA unwinding element (DUE), permitting loading of DNA polymerase. After initiation quickly degrades to an ADP-DnaA complex that is not apt for DNA replication. Binds acidic phospholipids. The sequence is that of Chromosomal replication initiator protein DnaA from Borreliella afzelii (strain PKo) (Borrelia afzelii).